Reading from the N-terminus, the 191-residue chain is Protein GrpE (191 aa).

The segment covering 1 to 11 has biased composition (basic and acidic residues); sequence MTDSSNAHEAE. Disordered stretches follow at residues 1 to 22 and 172 to 191; these read MTDS…DNEI and KVSK…NNNE.

It belongs to the GrpE family. Homodimer.

It is found in the cytoplasm. Participates actively in the response to hyperosmotic and heat shock by preventing the aggregation of stress-denatured proteins, in association with DnaK and GrpE. It is the nucleotide exchange factor for DnaK and may function as a thermosensor. Unfolded proteins bind initially to DnaJ; upon interaction with the DnaJ-bound protein, DnaK hydrolyzes its bound ATP, resulting in the formation of a stable complex. GrpE releases ADP from DnaK; ATP binding to DnaK triggers the release of the substrate protein, thus completing the reaction cycle. Several rounds of ATP-dependent interactions between DnaJ, DnaK and GrpE are required for fully efficient folding. In Chlamydia abortus (strain DSM 27085 / S26/3) (Chlamydophila abortus), this protein is Protein GrpE.